The primary structure comprises 31 residues: Cycloviolin-A (31 aa).

A cross-link (cyclopeptide (Gly-Asn)) is located at residues 1 to 31 (GVIPCGESCVFIPCISAAIGCSCKNKVCYRN). 3 cysteine pairs are disulfide-bonded: cysteine 5/cysteine 21, cysteine 9/cysteine 23, and cysteine 14/cysteine 28.

In terms of processing, this is a cyclic peptide.

Probably participates in a plant defense mechanism. Has anti-HIV activity. This is Cycloviolin-A from Leonia cymosa (Sacha uba).